Here is a 1905-residue protein sequence, read N- to C-terminus: Tudor domain-containing 6-like (1905 aa).

Tudor domains follow at residues 1-30 (MVEV…LREM), 215-279 (YERG…LFDL), and 435-491 (SVTP…AYEL). Positions 564–795 (SRAEGSFGNS…SKLTPPLSKL (232 aa)) are disordered. A compositionally biased stretch (basic and acidic residues) spans 573–591 (SEKRNQLNDLDRGGRKETT). The segment covering 592 to 602 (SKFQPYSQGSK) has biased composition (polar residues). A compositionally biased stretch (basic and acidic residues) spans 622–631 (FQTKEREQFE). 2 stretches are compositionally biased toward polar residues: residues 651–660 (VQKNMSQSGF) and 687–704 (LYSQ…SSYS). Residues 715–726 (RSKERQVSEHKQ) show a composition bias toward basic and acidic residues. 2 stretches are compositionally biased toward polar residues: residues 746-766 (KASQ…GSDQ) and 774-787 (NASQ…QESK). Tudor domains lie at 853 to 910 (YVNL…LLSI) and 1060 to 1118 (EIEV…IAAI). 4 disordered regions span residues 1213-1245 (IEDN…TPAV), 1449-1599 (EDFE…TETE), 1655-1682 (VEDL…SGPV), and 1827-1905 (ESPA…APSV). Acidic residues-rich tracts occupy residues 1491 to 1500 (EAEGLEDQDQ) and 1522 to 1535 (EQAE…DPGT). Over residues 1553–1588 (SQEHKDFPEQEEDRVAEHKNDISEPDLQSKEQKEDL) the composition is skewed to basic and acidic residues. Residues 1663–1673 (QESQICISGSD) show a composition bias toward polar residues. Residues 1876 to 1887 (FEPETDDMEQME) show a composition bias toward acidic residues.

Interacts with FRGY2 (a component of messenger ribonucleoprotein (mRNP) particle) during germ cell development. Expressed in testis.

It is found in the cytoplasm. Functionally, tudor domain-containing protein involved in germ cell development, more specifically the formation of chromatoid body (during spermiogenesis), Balbiani body (during oogenesis), germ plasm (upon fertilization), and for proper miRNA expression and spliceosome maturation. Component of cytoplasmic mRNP particle through interaction with FRGY2, and binds to maternal mRNA related to cell cycle (RCC1, RHAMM, INCENP-A, MAD2L1, HELLS) and a germ plasm specific mRNA (Dead end/Dnd1), it is proposed a role in translational activation of the maternal mRNAs repressed in mRNP particle. In Xenopus laevis (African clawed frog), this protein is Tudor domain-containing 6-like.